A 187-amino-acid polypeptide reads, in one-letter code: Elongation factor P (187 aa).

The protein belongs to the elongation factor P family.

The protein localises to the cytoplasm. The protein operates within protein biosynthesis; polypeptide chain elongation. Involved in peptide bond synthesis. Stimulates efficient translation and peptide-bond synthesis on native or reconstituted 70S ribosomes in vitro. Probably functions indirectly by altering the affinity of the ribosome for aminoacyl-tRNA, thus increasing their reactivity as acceptors for peptidyl transferase. The chain is Elongation factor P from Corynebacterium urealyticum (strain ATCC 43042 / DSM 7109).